The chain runs to 1627 residues: MRDKKGPVNKRVDFLSNKLNKYSIRKFTVGTASILIGSLMYLGTQQEAEAAENNIENPTTLKDNVQSKEVKIEEVTNKDTAPQGVEAKSEVTSNKDTIEHEPSVKAEDISKKEDTPKEVADVAEVQPKSSVTHNAETPKVRKARSVDEGSFDITRDSKNVVESTPITIQGKEHFEGYGSVDIQKKPTDLGVSEVTRFNVGNESNGLIGALQLKNKIDFSKDFNFKVRVANNHQSNTTGADGWGFLFSKGNAEEYLTNGGILGDKGLVNSGGFKIDTGYIYTSSMDKTEKQAGQGYRGYGAFVKNDSSGNSQMVGENIDKSKTNFLNYADNSTNTSDGKFHGQRLNDVILTYVASTGKMRAEYAGKTWETSITDLGLSKNQAYNFLITSSQRWGLNQGINANGWMRTDLKGSEFTFTPEAPKTITELEKKVEEIPFKKERKFNPDLAPGTEKVTREGQKGEKTITTPTLKNPLTGVIISKGEPKEEITKDPINELTEYGPETIAPGHRDEFDPKLPTGEKEEVPGKPGIKNPETGDVVRPPVDSVTKYGPVKGDSIVEKEEIPFEKERKFNPDLAPGTEKVTREGQKGEKTITTPTLKNPLTGEIISKGESKEEITKDPINELTEYGPETITPGHRDEFDPKLPTGEKEEVPGKPGIKNPETGDVVRPPVDSVTKYGPVKGDSIVEKEEIPFEKERKFNPDLAPGTEKVTREGQKGEKTITTPTLKNPLTGVIISKGEPKEEITKDPINELTEYGPETITPGHRDEFDPKLPTGEKEEVPGKPGIKNPETGDVVRPPVDSVTKYGPVKGDSIVEKEEIPFKKERKFNPDLAPGTEKVTREGQKGEKTITTPTLKNPLTGEIISKGESKEEITKDPINELTEYGPETITPGHRDEFDPKLPTGEKEEVPGKPGIKNPETGDVVRPPVDSVTKYGPVKGDSIVEKEEIPFEKERKFNPDLAPGTEKVTREGQKGEKTITTPTLKNPLTGEIISKGESKEEITKDPINELTEYGPETITPGHRDEFDPKLPTGEKEEVPGKPGIKNPETGDVVRPPVDSVTKYGPVKGDSIVEKEEIPFKKERKFNPDLAPGTEKVTREGQKGEKTITTPTLKNPLTGEIISKGESKEEITKDPINELTEYGPETITPGHRDEFDPKLPTGEKEEVPGKPGIKNPETGDVVRPPVDSVTKYGPVKGDSIVEKEEIPFEKERKFNPDLAPGTEKVTREGQKGEKTITTPTLKNPLTGEIISKGESKEEITKDPINELTEYGPETITPGHRDEFDPKLPTGEKEEVPGKPGIKNPETGDVVRPPVDSVTKYGPVKGDSIVEKEEIPFEKERKFNPDLAPGTEKVTREGQKGEKTITTPTLKNPLTGEIISKGESKEEITKDPVNELTEFGGEKIPQGHKDIFDPNLPTDQTEKVPGKPGIKNPDTGKVIEEPVDDVIKHGPKTGTPETKTVEIPFETKREFNPKLQPGEERVKQEGQPGSKTITTPITVNPLTGEKVGEGQPTEEITKQPVDKIVEFGGEKPKDPKGPENPEKPSRPTHPSGPVNPNNPGLSKDRAKPNGPVHSMDKNDKVKKSKIAKESVANQEKKRAELPKTGLESTQKGLIFSSIIGIAGLMLLARRRKN.

The signal sequence occupies residues Met-1–Ala-50. Positions Tyr-22–Ser-33 match the YSIRK-G/S signaling motif motif. The ligand binding A region, squamous nasal epithelial cell binding stretch occupies residues Ala-51–Glu-418. Disordered stretches follow at residues Glu-74–Ala-143, Lys-440–Thr-467, and Glu-496–Glu-1601. Basic and acidic residues-rich tracts occupy residues Asp-96 to Ala-120, Lys-451 to Lys-461, Gly-505 to Pro-523, Ser-554 to Asn-570, Lys-579 to Lys-589, Ser-606 to Ile-619, Gly-633 to Pro-651, Ser-682 to Asn-698, Lys-707 to Lys-717, Gly-736 to Ile-747, Gly-761 to Pro-779, Ser-810 to Asn-826, Lys-835 to Lys-845, Ser-862 to Ile-875, Gly-889 to Pro-907, Ser-938 to Asn-954, Lys-963 to Lys-973, Ser-990 to Ile-1003, Gly-1017 to Pro-1035, Ser-1066 to Asn-1082, Lys-1091 to Lys-1101, Ser-1118 to Ile-1131, Gly-1145 to Pro-1163, Ser-1194 to Asn-1210, Lys-1219 to Lys-1229, Ser-1246 to Ile-1259, Gly-1273 to Pro-1291, Ser-1322 to Asn-1338, Lys-1347 to Lys-1357, Ser-1374 to Val-1387, Lys-1431 to Lys-1442, and Phe-1459 to Gln-1478. The G5 1 domain occupies Ala-419–Thr-501. Residues Tyr-547–Thr-629 enclose the G5 2 domain. The G5 3 domain occupies Tyr-675–Thr-757. The region spanning Tyr-803–Thr-885 is the G5 4 domain. Residues Tyr-931–Thr-1013 form the G5 5 domain. The G5 6 domain maps to Tyr-1059–Thr-1141. One can recognise a G5 7 domain in the interval Tyr-1187–Thr-1269. One can recognise a G5 8 domain in the interval Tyr-1315–Lys-1397. The G5 9 domain maps to His-1443 to Lys-1525. Polar residues predominate over residues Gln-1481 to Pro-1495. Over residues Glu-1509 to Ser-1539 the composition is skewed to basic and acidic residues. Residues Leu-1595–Gly-1599 carry the LPXTG sorting signal motif. The residue at position 1598 (Thr-1598) is a Pentaglycyl murein peptidoglycan amidated threonine. The propeptide at Gly-1599–Asn-1627 is removed by sortase.

It is found in the secreted. It localises to the cell wall. Functionally, promotes adhesion of bacterial cells to human squamous nasal epithelial cells, a phenomenon which is likely to be important in nasal colonization. Forms short, extremely dense and thin fibrils all over the bacterial surface. Does not bind to either buccal cells or non-differentiated keratinocytes. Promotes cellular aggregation leading to biofilm formation. The protein is Surface protein G (sasG) of Staphylococcus aureus (strain NCTC 8325 / PS 47).